Consider the following 158-residue polypeptide: Cysteine-rich venom protein VAR7 (158 aa).

A signal peptide spans 1–22; sequence MILLKLYLTLAAILCQSRGTTS. Positions 41–158 constitute an SCP domain; the sequence is NKHNDLRRTV…MGCAINLCPN (118 aa). C77 and C156 are oxidised to a cystine.

This sequence belongs to the CRISP family. Post-translationally, contains 8 disulfide bonds. In terms of tissue distribution, expressed by the venom gland.

It is found in the secreted. Its function is as follows. Blocks ryanodine receptors, and potassium channels. This Varanus acanthurus (Ridge-tailed monitor) protein is Cysteine-rich venom protein VAR7.